We begin with the raw amino-acid sequence, 345 residues long: Mitochondrial metalloendopeptidase OMA1 (345 aa).

The Mitochondrial matrix segment spans residues 1–67; it reads MLRNIIRFKG…ILLDKSSRKY (67 aa). Residues 68–88 form a helical membrane-spanning segment; it reads LALLFGGCSLFYYTHLDKAPV. Residues 89-345 are Mitochondrial intermembrane-facing; that stretch reads SDRSRFIWVS…GNYYKSFFSM (257 aa). Position 203 (histidine 203) interacts with Zn(2+). Glutamate 204 is an active-site residue. Zn(2+) contacts are provided by histidine 207 and glutamate 257. The cysteines at positions 272 and 332 are disulfide-linked. A required for protease activation region spans residues 314 to 345; the sequence is ENMSKWLPKANEIYEQSDCSSMGNYYKSFFSM.

This sequence belongs to the peptidase M48 family. In terms of assembly, homooligomer. It depends on Zn(2+) as a cofactor. Forms a redox-dependent disulfide bond, which plays a structural role and regulates its conformational stability and activity.

It localises to the mitochondrion inner membrane. Protease activity is induced in response to various mitochondrial stress, such as changes in membrane potential, oxidative stress or chronic hyperpolarization, and depends on its C-terminal region. Functionally, protease that is part of the quality control system in the inner membrane of mitochondria. Activated in response to various mitochondrial stress, leading to the proteolytic cleavage of target proteins, such as OXA1 and COX1. Cleaves and thereby promotes the turnover of mistranslated or misfolded membrane proteins. Cleaves the misfolded multi-pass membrane protein OXA1. Involved in quality control of cytochrome oxidase assembly: mediates the cleavage of COX1 in cells lacking COA2. Required for the stability of the respiratory supercomplexes. Required for TOR signaling. The protein is Mitochondrial metalloendopeptidase OMA1 of Saccharomyces cerevisiae (strain ATCC 204508 / S288c) (Baker's yeast).